Consider the following 334-residue polypeptide: Large ribosomal subunit protein uL3 (334 aa).

Positions 1 to 10 (MGMKKNRPRR) are enriched in basic residues. The tract at residues 1–21 (MGMKKNRPRRGSLAFSPRKRA) is disordered.

Belongs to the universal ribosomal protein uL3 family. As to quaternary structure, part of the 50S ribosomal subunit. Forms a cluster with proteins L14 and L24e.

In terms of biological role, one of the primary rRNA binding proteins, it binds directly near the 3'-end of the 23S rRNA, where it nucleates assembly of the 50S subunit. The chain is Large ribosomal subunit protein uL3 from Methanococcus maripaludis (strain DSM 14266 / JCM 13030 / NBRC 101832 / S2 / LL).